Here is a 154-residue protein sequence, read N- to C-terminus: Ribonuclease H (154 aa).

Residues 1 to 141 (MKRIEAYTDG…ADELAREGME (141 aa)) enclose the RNase H type-1 domain. Mg(2+) contacts are provided by D9, E47, D69, and D133.

This sequence belongs to the RNase H family. In terms of assembly, monomer. The cofactor is Mg(2+).

It is found in the cytoplasm. The catalysed reaction is Endonucleolytic cleavage to 5'-phosphomonoester.. Its function is as follows. Endonuclease that specifically degrades the RNA of RNA-DNA hybrids. This chain is Ribonuclease H, found in Brucella anthropi (strain ATCC 49188 / DSM 6882 / CCUG 24695 / JCM 21032 / LMG 3331 / NBRC 15819 / NCTC 12168 / Alc 37) (Ochrobactrum anthropi).